Consider the following 231-residue polypeptide: Uracil phosphoribosyltransferase (231 aa).

Position 38–42 (38–42) interacts with GTP; sequence KGLVR. 5-phospho-alpha-D-ribose 1-diphosphate contacts are provided by residues Arg-87, Arg-112, and 140-148; that span reads DPMIATGST. Residues Ile-203 and 208–210 each bind uracil; that span reads GDA. Asp-209 lines the 5-phospho-alpha-D-ribose 1-diphosphate pocket.

It belongs to the UPRTase family. Mg(2+) is required as a cofactor.

The enzyme catalyses UMP + diphosphate = 5-phospho-alpha-D-ribose 1-diphosphate + uracil. It functions in the pathway pyrimidine metabolism; UMP biosynthesis via salvage pathway; UMP from uracil: step 1/1. Its activity is regulated as follows. Allosterically activated by GTP. Functionally, catalyzes the conversion of uracil and 5-phospho-alpha-D-ribose 1-diphosphate (PRPP) to UMP and diphosphate. In Methanococcus maripaludis (strain C7 / ATCC BAA-1331), this protein is Uracil phosphoribosyltransferase.